Consider the following 413-residue polypeptide: Ureide permease 5 (413 aa).

Topologically, residues 1–18 (MMIAQELGIYVVESKGGA) are extracellular. The helical transmembrane segment at 19–39 (ILCLLLSLLCLGTWPALMALL) threads the bilayer. At 40 to 50 (ERRGRLPQHTY) the chain is on the cytoplasmic side. A helical transmembrane segment spans residues 51–71 (LDYSITNFLAAIFIAFVFGGI). Over 72–91 (GESTHEAPSFITQLTQIQDN) the chain is Extracellular. A helical membrane pass occupies residues 92–112 (WPSVLFAMAGGVGLSIGNLAT). Over 113 to 115 (QYS) the chain is Cytoplasmic. Residues 116 to 136 (LAFVGLSVTEVTAASITVVVG) traverse the membrane as a helical segment. Topologically, residues 137 to 149 (TTVNYFLDNGLNR) are extracellular. The chain crosses the membrane as a helical span at residues 150-170 (ADILFSGVGCFMVAVCLGSAV). Residues 171–240 (HSSNSADIKA…RAIKVLGKSM (70 aa)) lie on the Cytoplasmic side of the membrane. Residue 232–239 (AIKVLGKS) participates in ATP binding. The helical transmembrane segment at 241–261 (VVGLGITFFAGLSFSLFSPLF) threads the bilayer. Topologically, residues 262 to 278 (NLATNDQWHTLKQGVPK) are extracellular. The chain crosses the membrane as a helical span at residues 279-299 (LIVYTAFFYFSLSCFVIAVAL). Topologically, residues 300–326 (NISFLYKPVLDSPRSSFREYLSDWNGR) are cytoplasmic. Residues 327 to 347 (GWALAAGLLCGFGNGLQFMGG) form a helical membrane-spanning segment. Topologically, residues 348–352 (QAAGY) are extracellular. A helical transmembrane segment spans residues 353-373 (AASDAVQALPLVSTFWGIYLF). At 374 to 384 (GEYRRSSTRTY) the chain is on the cytoplasmic side. The helical transmembrane segment at 385–405 (ALLVGMLVMFTVAVGLLMASA) threads the bilayer. Residues 406–413 (GERETRFT) are Extracellular-facing.

It belongs to the plant ureide permease (TC 2.A.7.19) family. In terms of tissue distribution, expressed in lateral roots, rosette leaves, stems, stipules, flower stigma, pedicels and the connective tissue between pollen sacks.

It is found in the membrane. In terms of biological role, proton-coupled transporter that transports a wide spectrum of oxo derivatives of heterocyclic nitrogen compounds, including allantoin, uric acid and xanthine, but not adenine. Mediates transport of uracil and 5-fluorouracil (a toxic uracil analog). Proton-coupled transporter that transports a wide spectrum of oxo derivatives of heterocyclic nitrogen compounds, including allantoin, xanthine and uracil. This chain is Ureide permease 5, found in Arabidopsis thaliana (Mouse-ear cress).